We begin with the raw amino-acid sequence, 348 residues long: tRNA pseudouridine synthase D (348 aa).

The Nucleophile role is filled by Asp-81. The 147-residue stretch at 158 to 304 (GVPNYFGAQR…MRHERRSIEL (147 aa)) folds into the TRUD domain.

It belongs to the pseudouridine synthase TruD family.

The enzyme catalyses uridine(13) in tRNA = pseudouridine(13) in tRNA. Its function is as follows. Responsible for synthesis of pseudouridine from uracil-13 in transfer RNAs. The sequence is that of tRNA pseudouridine synthase D from Aliivibrio salmonicida (strain LFI1238) (Vibrio salmonicida (strain LFI1238)).